The sequence spans 323 residues: tRNA U34 carboxymethyltransferase (323 aa).

Residues K91, W105, K110, G130, 181 to 182 (IE), M196, Y200, and R315 contribute to the carboxy-S-adenosyl-L-methionine site.

This sequence belongs to the class I-like SAM-binding methyltransferase superfamily. CmoB family. As to quaternary structure, homotetramer.

It catalyses the reaction carboxy-S-adenosyl-L-methionine + 5-hydroxyuridine(34) in tRNA = 5-carboxymethoxyuridine(34) in tRNA + S-adenosyl-L-homocysteine + H(+). Catalyzes carboxymethyl transfer from carboxy-S-adenosyl-L-methionine (Cx-SAM) to 5-hydroxyuridine (ho5U) to form 5-carboxymethoxyuridine (cmo5U) at position 34 in tRNAs. The sequence is that of tRNA U34 carboxymethyltransferase from Enterobacter sp. (strain 638).